Reading from the N-terminus, the 544-residue chain is Chaperonin GroEL (544 aa).

Residues 30-33, Lys51, 87-91, Gly415, and Asp495 each bind ATP; these read TLGP and DGTTT.

It belongs to the chaperonin (HSP60) family. In terms of assembly, forms a cylinder of 14 subunits composed of two heptameric rings stacked back-to-back. Interacts with the co-chaperonin GroES.

The protein resides in the cytoplasm. The enzyme catalyses ATP + H2O + a folded polypeptide = ADP + phosphate + an unfolded polypeptide.. In terms of biological role, together with its co-chaperonin GroES, plays an essential role in assisting protein folding. The GroEL-GroES system forms a nano-cage that allows encapsulation of the non-native substrate proteins and provides a physical environment optimized to promote and accelerate protein folding. This chain is Chaperonin GroEL, found in Neisseria meningitidis serogroup C (strain 053442).